Reading from the N-terminus, the 238-residue chain is tRNA (guanine-N(7)-)-methyltransferase (238 aa).

S-adenosyl-L-methionine contacts are provided by E68, E93, D120, and D143. D143 is a catalytic residue. Residues K147, D179, and 216-219 (TKFE) contribute to the substrate site.

Belongs to the class I-like SAM-binding methyltransferase superfamily. TrmB family.

The catalysed reaction is guanosine(46) in tRNA + S-adenosyl-L-methionine = N(7)-methylguanosine(46) in tRNA + S-adenosyl-L-homocysteine. It participates in tRNA modification; N(7)-methylguanine-tRNA biosynthesis. In terms of biological role, catalyzes the formation of N(7)-methylguanine at position 46 (m7G46) in tRNA. The chain is tRNA (guanine-N(7)-)-methyltransferase from Shewanella sp. (strain W3-18-1).